Here is a 191-residue protein sequence, read N- to C-terminus: Protein LURP-one-related 6 (191 aa).

It belongs to the LOR family.

Its function is as follows. Might be related to the phospholipid scramblase and tubby-like superfamily of membrane tethered transcription factors. The sequence is that of Protein LURP-one-related 6 from Arabidopsis thaliana (Mouse-ear cress).